A 444-amino-acid polypeptide reads, in one-letter code: Putative GTP cyclohydrolase URC1 (444 aa).

Arg-268–Glu-272 lines the GTP pocket. 3 residues coordinate Zn(2+): Cys-273, Cys-284, and Cys-286. Glu-315–Arg-317 lines the GTP pocket. The active-site Proton acceptor is the Asp-353. The active-site Nucleophile is the Arg-355. Residues Ser-377 and Lys-382 each contribute to the GTP site.

It belongs to the GTP cyclohydrolase II family.

Its subcellular location is the cytoplasm. The protein resides in the nucleus. Involved in uracil catabolism. The chain is Putative GTP cyclohydrolase URC1 (URC1) from Lachancea kluyveri (Yeast).